Consider the following 151-residue polypeptide: MKVVLLKDVSKIGKKGEIKNVSDGYARNYLIPKGLALEATPRVLKRLEAEKRKKEEEKIQIKTQNEELLKMLKKFLYKIPVKAGESGKLFGALTNSDIAKAVEKIADVNIDKKFIVLEKPIKEIGMYDVLVRLPEGVSGKIKVEVIQEGKN.

Belongs to the bacterial ribosomal protein bL9 family.

Its function is as follows. Binds to the 23S rRNA. The protein is Large ribosomal subunit protein bL9 of Thermosipho melanesiensis (strain DSM 12029 / CIP 104789 / BI429).